Consider the following 360-residue polypeptide: Protein Wnt-2 (360 aa).

A signal peptide spans 1–25; it reads MNAPLGGIWLGLPLLLTWLSPEVSS. Cystine bridges form between cysteine 76–cysteine 87, cysteine 127–cysteine 135, cysteine 137–cysteine 157, cysteine 206–cysteine 220, cysteine 208–cysteine 215, cysteine 278–cysteine 309, cysteine 294–cysteine 304, cysteine 308–cysteine 348, cysteine 324–cysteine 339, cysteine 326–cysteine 336, and cysteine 331–cysteine 332. Serine 212 carries the O-palmitoleoyl serine; by PORCN lipid modification. Asparagine 295 carries an N-linked (GlcNAc...) asparagine glycan.

This sequence belongs to the Wnt family. Palmitoleoylation is required for efficient binding to frizzled receptors. Depalmitoleoylation leads to Wnt signaling pathway inhibition.

The protein localises to the secreted. The protein resides in the extracellular space. It is found in the extracellular matrix. Its function is as follows. Ligand for members of the frizzled family of seven transmembrane receptors. Probable developmental protein. May be a signaling molecule which affects the development of discrete regions of tissues. Is likely to signal over only few cell diameters. The polypeptide is Protein Wnt-2 (WNT2) (Oryctolagus cuniculus (Rabbit)).